The primary structure comprises 244 residues: Cell division protein ZipA (244 aa).

The Periplasmic portion of the chain corresponds to 1–4 (MSDM). Residues 5–25 (AMIRIGILIAGLLLVAAIFLF) traverse the membrane as a helical segment. The Cytoplasmic portion of the chain corresponds to 26-244 (GRPKKSPQGR…APPLTKSPRW (219 aa)). The interval 30–91 (KSPQGRRVDK…GAGGNDVGKR (62 aa)) is disordered. The span at 35 to 50 (RRVDKDDTQPRERREP) shows a compositional bias: basic and acidic residues.

Belongs to the ZipA family. Interacts with FtsZ via their C-terminal domains.

It localises to the cell inner membrane. Functionally, essential cell division protein that stabilizes the FtsZ protofilaments by cross-linking them and that serves as a cytoplasmic membrane anchor for the Z ring. Also required for the recruitment to the septal ring of downstream cell division proteins. The sequence is that of Cell division protein ZipA from Xanthomonas campestris pv. campestris (strain ATCC 33913 / DSM 3586 / NCPPB 528 / LMG 568 / P 25).